The primary structure comprises 261 residues: MASPDWGYDDKNGPEQWSKLYPIANGNNQSPVDIKTSETKHDTSLKPISVSYNPATAKEIINVGHSFHVNFEDNDNRSVLKGGPFSDSYRLFQFHFHWGSTNEHGSEHTVDGVKYSAELHIAHWNSAKYSNLAEAASKADGLAVIGVLMKVGEANPKLQKVLDALQAIKTKGKRAPFTNFDPSTLLPSSLDFWTYPGSLTHPPLYESVTWIICKESISVSSEQLAQFRSLLSNVEGDNAVPMQHNNRPTQPLKGRTVRASF.

Positions 1-40 (MASPDWGYDDKNGPEQWSKLYPIANGNNQSPVDIKTSETK) are disordered. An N-acetylalanine modification is found at Ala2. The Alpha-carbonic anhydrase domain maps to 4-261 (PDWGYDDKNG…LKGRTVRASF (258 aa)). His65 functions as the Proton donor/acceptor in the catalytic mechanism. Residues His95, His97, and His120 each coordinate Zn(2+). Substrate is bound by residues Thr200 and 200-201 (TH). The segment at 241–261 (PMQHNNRPTQPLKGRTVRASF) is disordered.

This sequence belongs to the alpha-carbonic anhydrase family. Requires Zn(2+) as cofactor.

It is found in the cytoplasm. The catalysed reaction is hydrogencarbonate + H(+) = CO2 + H2O. It carries out the reaction urea = cyanamide + H2O. With respect to regulation, inhibited by acetazolamide. Functionally, catalyzes the reversible hydration of carbon dioxide. Can hydrate cyanamide to urea. This Pan troglodytes (Chimpanzee) protein is Carbonic anhydrase 1 (CA1).